The chain runs to 1773 residues: Zinc finger CCCH domain-containing protein 19 (1773 aa).

Residues 145-166 (SGDRLEENKEVSMEEEPSSHEL) are disordered. Positions 147–156 (DRLEENKEVS) are enriched in basic and acidic residues. The stretch at 196-218 (GEEIESDLESKKEKVDVIEEETT) forms a coiled coil. Disordered regions lie at residues 270–290 (IGEG…DVTE), 361–409 (DVDK…AGQT), and 434–591 (ISEM…KTVK). 2 stretches are compositionally biased toward basic and acidic residues: residues 273–286 (GAKD…KEGV) and 361–378 (DVDK…HVPE). Residues 403–437 (AEEAGQTVDLEEIREENQELSKELAQVDETKISEM) adopt a coiled-coil conformation. Basic and acidic residues-rich tracts occupy residues 444–455 (MIKDEDQEKDDN) and 497–513 (KVDR…TDTR). Acidic residues-rich tracts occupy residues 514 to 529 (IEDE…TDVA) and 551 to 572 (EEMT…EVEE). Positions 578–588 (GGKRKRGRNTK) are enriched in basic residues. Residues 581–588 (RKRGRNTK) carry the Nuclear localization signal 1 motif. A PHD-type zinc finger spans residues 599–665 (EDVCFMCFDG…TYLCYTCMFS (67 aa)). The segment covering 741–751 (AKRPLKGHETN) has biased composition (basic and acidic residues). A disordered region spans residues 741-797 (AKRPLKGHETNASKQGTASETDYVTDGGSDSDSSPKKRKTRSRSKSGSAEKILSSGD). Residues 752-762 (ASKQGTASETD) show a composition bias toward polar residues. In terms of domain architecture, SWIB/MDM2 spans 801–884 (SDETMEWASK…LNLLDSHFLK (84 aa)). The span at 903-919 (PNHVDVDENLDHPVKSG) shows a compositional bias: basic and acidic residues. The disordered stretch occupies residues 903-935 (PNHVDVDENLDHPVKSGKDKKRKTRKKNVRKGR). A compositionally biased stretch (basic residues) spans 920–935 (KDKKRKTRKKNVRKGR). The short motif at 921–928 (DKKRKTRK) is the Nuclear localization signal 2 element. Residues 944–1076 (AVDMHNINLI…KAIALQEVRV (133 aa)) enclose the Plus3 domain. A compositionally biased stretch (basic and acidic residues) spans 1139 to 1152 (EEIPEIHADPKMDP). Residues 1139–1274 (EEIPEIHADP…PETPARSSRA (136 aa)) are disordered. Acidic residues predominate over residues 1153 to 1163 (DCESEDEDEKE). Positions 1193-1212 (FSSNESWTGTSNYSNTSANR) are enriched in polar residues. S1281 is modified (phosphoserine). One can recognise a GYF domain in the interval 1307–1361 (EKIWHYKDPSGKVQGPFSMAQLRKWNNTGYFPAKLEIWKANESPLDSVLLTDALA). Polar residues-rich tracts occupy residues 1409–1433 (RNSQ…TTPT), 1441–1469 (SRWS…QSQT), 1499–1509 (VSVNHSATLHS), and 1518–1528 (SWGSMQTDHGG). 3 disordered regions span residues 1409 to 1469 (RNSQ…QSQT), 1485 to 1605 (QPQT…SWGQ), and 1649 to 1746 (GQTQ…QQNN). The segment covering 1529–1555 (SNTPSSQNNSTSYGTPSPSVLPSQSQP) has biased composition (low complexity). Polar residues predominate over residues 1569-1579 (SQPNAQAQAQW). Composition is skewed to low complexity over residues 1585–1602 (NNNQ…QNSS) and 1666–1677 (QSQSQSQVQAQA). The segment covering 1678 to 1708 (GTTGSGWMQPGQGIQSGNSNQNWGTQNQTAI) has biased composition (polar residues). Positions 1722 to 1735 (GNQQQSQNGDSGYG) are enriched in low complexity. Residues 1737–1746 (NRQSGGQQNN) show a composition bias toward polar residues. A C3H1-type zinc finger spans residues 1747-1773 (FKGQRVCKFFRENGHCRKGASCNYLHN).

As to quaternary structure, interacts with unmethylated histone H3 and AGO2. The interaction with AGO2 in required to direct DNA methylation and silencing. As to expression, expressed in seedlings, mostly in the vasculature and shoot apices of young seedlings.

Its subcellular location is the nucleus. Its function is as follows. Plays a central role in integrating RNA silencing and chromatin signals in 21 nt siRNA-dependent DNA methylation on cytosine pathway leading to transcriptional gene silencing of specific sequences. Involved in a chromatin-based RNA silencing pathway that encompasses both post-transcriptional gene silencing (PTGS) (e.g. RDR1, RDR6 and AGO2) and transcriptional gene silencing (TGS) (e.g. siRNA-dependent DNA methylation and histone H3) components. Mediates siRNA accumulation at specific chromatin loci. Binds H3K4me0 through its PHD to enforce low levels of H3K4 methylation and gene silencing at a subset of genomic loci. This is Zinc finger CCCH domain-containing protein 19 (NERD) from Arabidopsis thaliana (Mouse-ear cress).